A 121-amino-acid chain; its full sequence is Flagellar protein FliT (121 aa).

Positions 1-50 are required for homodimerization; that stretch reads MNNAPHLYFAWQQLVEKSQLMLRLATEEQWDELITSEMAYVNAVQEIAHL. Residues 60-98 are fliD binding; it reads MQEQLRPMLRLILDNESKVKQLLQIRMDELAKLVGQSSV.

This sequence belongs to the FliT family. In terms of assembly, homodimer. Interacts with FliD and FlhC.

It is found in the cytoplasm. The protein resides in the cytosol. Its function is as follows. Dual-function protein that regulates the transcription of class 2 flagellar operons and that also acts as an export chaperone for the filament-capping protein FliD. As a transcriptional regulator, acts as an anti-FlhDC factor; it directly binds FlhC, thus inhibiting the binding of the FlhC/FlhD complex to class 2 promoters, resulting in decreased expression of class 2 flagellar operons. As a chaperone, effects FliD transition to the membrane by preventing its premature polymerization, and by directing it to the export apparatus. This is Flagellar protein FliT from Escherichia coli (strain 55989 / EAEC).